Consider the following 279-residue polypeptide: NAD kinase (279 aa).

D57 acts as the Proton acceptor in catalysis. Residues 57–58, 133–134, R159, D161, and 172–177 contribute to the NAD(+) site; these read DG, NE, and TAYNKS.

This sequence belongs to the NAD kinase family. A divalent metal cation is required as a cofactor.

The protein localises to the cytoplasm. It carries out the reaction NAD(+) + ATP = ADP + NADP(+) + H(+). Its function is as follows. Involved in the regulation of the intracellular balance of NAD and NADP, and is a key enzyme in the biosynthesis of NADP. Catalyzes specifically the phosphorylation on 2'-hydroxyl of the adenosine moiety of NAD to yield NADP. The polypeptide is NAD kinase (Streptococcus pyogenes serotype M2 (strain MGAS10270)).